The following is a 305-amino-acid chain: PI-PLC X domain-containing protein 2 (305 aa).

Positions 42 to 215 (HLHNLPLSNL…NCQVLIFYHC (174 aa)) constitute a PI-PLC X-box domain. Catalysis depends on residues His57 and His132.

As to expression, widely expressed.

The protein localises to the nucleus. It catalyses the reaction a 1,2-diacyl-sn-glycero-3-phospho-(1D-myo-inositol) + H2O = 1D-myo-inositol 1-phosphate + a 1,2-diacyl-sn-glycerol + H(+). Catalyzes the hydrolysis of inositol from phosphatidylinositol (1,2-diacyl-sn-glycero-3-phospho-(1D-myo-inositol), PI). Could also hydrolyze various multi-phosphorylated derivatives of PI, such as phosphatidylinositol-4,5 bisphosphate (PIP2), releasing inositol-1,4,5-trisphosphate (IP3) and the protein kinase C activator diacylglycerol (DAG), therefore mediating cell signaling. The protein is PI-PLC X domain-containing protein 2 (PLCXD2) of Homo sapiens (Human).